The sequence spans 122 residues: Large ribosomal subunit protein bL12 (122 aa).

This sequence belongs to the bacterial ribosomal protein bL12 family. Homodimer. Part of the ribosomal stalk of the 50S ribosomal subunit. Forms a multimeric L10(L12)X complex, where L10 forms an elongated spine to which 2 to 4 L12 dimers bind in a sequential fashion. Binds GTP-bound translation factors.

In terms of biological role, forms part of the ribosomal stalk which helps the ribosome interact with GTP-bound translation factors. Is thus essential for accurate translation. The polypeptide is Large ribosomal subunit protein bL12 (Vibrio parahaemolyticus serotype O3:K6 (strain RIMD 2210633)).